Consider the following 139-residue polypeptide: Putative pre-16S rRNA nuclease (139 aa).

The protein belongs to the YqgF nuclease family.

The protein localises to the cytoplasm. Could be a nuclease involved in processing of the 5'-end of pre-16S rRNA. This Dictyoglomus thermophilum (strain ATCC 35947 / DSM 3960 / H-6-12) protein is Putative pre-16S rRNA nuclease.